A 501-amino-acid chain; its full sequence is Lysine--tRNA ligase (501 aa).

2 residues coordinate Mg(2+): glutamate 412 and glutamate 419.

This sequence belongs to the class-II aminoacyl-tRNA synthetase family. Homodimer. Mg(2+) serves as cofactor.

Its subcellular location is the cytoplasm. It carries out the reaction tRNA(Lys) + L-lysine + ATP = L-lysyl-tRNA(Lys) + AMP + diphosphate. This chain is Lysine--tRNA ligase, found in Dechloromonas aromatica (strain RCB).